The primary structure comprises 1281 residues: Enterobactin synthase component F (1281 aa).

An elongation/condensation region spans residues 1–301; it reads MSQHLPLVAA…NVLPLGIHIA (301 aa). Positions 486 to 891 are adenylation; it reads SYREMHEQVV…ALPDVKQAVT (406 aa). Residues 975-1050 form the Carrier domain; the sequence is APKAGSETII…KLATIIDGEE (76 aa). Serine 1010 carries the post-translational modification O-(pantetheine 4'-phosphoryl)serine. The segment at 1070–1281 is thioesterase; that stretch reads PTLFCFHPAS…GPIIRATLNR (212 aa). Histidine 1259 serves as the catalytic Proton acceptor; for thioesterase activity.

The protein belongs to the ATP-dependent AMP-binding enzyme family. EntF subfamily. In terms of assembly, proteins EntB, EntD, EntE and EntF are the component of the enterobactin synthase. Components probably do not form a stable complex. EntF acts as a catalytic monomer. Pantetheine 4'-phosphate serves as cofactor. Post-translationally, 4'-phosphopantetheine is transferred from CoA to a specific serine of apo-EntF by EntD. Holo-EntF so formed is then acylated with seryl-AMP.

It localises to the cytoplasm. It catalyses the reaction 3 2,3-dihydroxybenzoate + 3 L-serine + 6 ATP = enterobactin + 6 AMP + 6 diphosphate + 4 H(+). The enzyme catalyses holo-[peptidyl-carrier protein] + L-serine + ATP = L-seryl-[peptidyl-carrier protein] + AMP + diphosphate. It participates in siderophore biosynthesis; enterobactin biosynthesis. Its function is as follows. Involved in the biosynthesis of the siderophore enterobactin (enterochelin), which is a macrocyclic trimeric lactone of N-(2,3-dihydroxybenzoyl)-serine. EntF catalyzes the activation of L-serine via ATP-dependent PPi exchange reaction to form seryladenylate. Activated L-serine is loaded onto the peptidyl carrier domain via a thioester linkage to the phosphopanthetheine moiety, forming seryl-S-Ppant-EntF. EntF acts then as the sole catalyst for the formation of the three amide and three ester linkages found in enterobactin, using seryladenylate and 2,3-dihydroxybenzoate-S-Ppant-EntB (DHB-S-Ppant-EntB) as substrates, via the formation of a DHB-Ser-S-Ppant-EntF intermediate. The polypeptide is Enterobactin synthase component F (entF) (Shigella flexneri).